Here is a 399-residue protein sequence, read N- to C-terminus: Exodeoxyribonuclease 7 large subunit (399 aa).

Belongs to the XseA family. As to quaternary structure, heterooligomer composed of large and small subunits.

Its subcellular location is the cytoplasm. The enzyme catalyses Exonucleolytic cleavage in either 5'- to 3'- or 3'- to 5'-direction to yield nucleoside 5'-phosphates.. Its function is as follows. Bidirectionally degrades single-stranded DNA into large acid-insoluble oligonucleotides, which are then degraded further into small acid-soluble oligonucleotides. The polypeptide is Exodeoxyribonuclease 7 large subunit (Clostridium acetobutylicum (strain ATCC 824 / DSM 792 / JCM 1419 / IAM 19013 / LMG 5710 / NBRC 13948 / NRRL B-527 / VKM B-1787 / 2291 / W)).